A 1259-amino-acid chain; its full sequence is Clustered mitochondria protein homolog (1259 aa).

Residues 1–27 (MSQTNGNMEHSKETPQSQEVEQLTNGN) are compositionally biased toward polar residues. Positions 1-38 (MSQTNGNMEHSKETPQSQEVEQLTNGNHPEEQQEEEEN) are disordered. The 245-residue stretch at 324–568 (DITRSQESYL…RVTPLDVMWQ (245 aa)) folds into the Clu domain. 2 stretches are compositionally biased toward basic and acidic residues: residues 612–628 (AEAEKEKPAESSESKEQ) and 634–647 (TEEKTEESSDQERV). Disordered regions lie at residues 612-647 (AEAEKEKPAESSESKEQDSEEKTEEKTEESSDQERV) and 881-908 (VVNGANNAAQDEGKKKKKKGADKSPSRA). TPR repeat units follow at residues 982–1015 (AKLYHQLSMLYYQTDEKEAAVELARKAVIVTERT), 1024–1057 (ILAYLNLSLFEHASGNTKTALVYIKHAMDLWKII), and 1066–1099 (ITTMNNAAVMLQHLKQYADSRKWFEASLSVCESL). Disordered stretches follow at residues 1192–1215 (TKVQPQVGQTAPEASGAKNAANAS) and 1229–1259 (EGGDTSSSRSKQKKRAAASNPKLRGSKKSSA).

This sequence belongs to the CLU family. May associate with the eukaryotic translation initiation factor 3 (eIF-3) complex.

The protein localises to the cytoplasm. Its function is as follows. mRNA-binding protein involved in proper cytoplasmic distribution of mitochondria. In Aspergillus clavatus (strain ATCC 1007 / CBS 513.65 / DSM 816 / NCTC 3887 / NRRL 1 / QM 1276 / 107), this protein is Clustered mitochondria protein homolog.